The sequence spans 376 residues: NAD-capped RNA hydrolase (376 aa).

Cys-182, Cys-185, Cys-200, and Cys-211 together coordinate Zn(2+). Residues Tyr-222, Ala-258–Phe-260, Glu-274, Glu-278, and Glu-321 each bind substrate. One can recognise a Nudix hydrolase domain in the interval Pro-223–Pro-351. Positions 258, 274, 278, and 321 each coordinate Mg(2+). Positions Gly-259–Gly-280 match the Nudix box motif. The Microbody targeting signal signature appears at Val-374 to Met-376.

The protein belongs to the Nudix hydrolase family. NudC subfamily. In terms of assembly, homodimer. Mg(2+) serves as cofactor. It depends on Zn(2+) as a cofactor.

The catalysed reaction is a 5'-end NAD(+)-phospho-ribonucleoside in mRNA + H2O = a 5'-end phospho-adenosine-phospho-ribonucleoside in mRNA + beta-nicotinamide D-ribonucleotide + 2 H(+). It carries out the reaction NAD(+) + H2O = beta-nicotinamide D-ribonucleotide + AMP + 2 H(+). The enzyme catalyses NADH + H2O = reduced beta-nicotinamide D-ribonucleotide + AMP + 2 H(+). In terms of biological role, mRNA decapping enzyme that specifically removes the nicotinamide adenine dinucleotide (NAD) cap from a subset of mRNAs by hydrolyzing the diphosphate linkage to produce nicotinamide mononucleotide (NMN) and 5' monophosphate mRNA. The NAD-cap is present at the 5'-end of some RNAs; in contrast to the canonical N7 methylguanosine (m7G) cap, the NAD cap promotes mRNA decay. Mediates the hydrolysis of some nucleoside diphosphate derivatives. The polypeptide is NAD-capped RNA hydrolase (Schizosaccharomyces pombe (strain 972 / ATCC 24843) (Fission yeast)).